A 101-amino-acid polypeptide reads, in one-letter code: Non-histone chromosomal protein HMG-14 (101 aa).

The tract at residues 1–101 (MPKRKVSSAE…EAEEKEAKSD (101 aa)) is disordered. At Ser7 the chain carries ADP-ribosylserine. Residue Ser8 is modified to Phosphoserine. Lys14 bears the N6-acetyllysine mark. Ser21 is modified (phosphoserine). Ser25 is subject to ADP-ribosylserine; alternate. The residue at position 25 (Ser25) is a Phosphoserine; alternate. N6-acetyllysine is present on Lys27. 2 stretches are compositionally biased toward basic and acidic residues: residues 33 to 51 (VETK…DKKV) and 70 to 86 (ETKE…KNEE). Thr82 is modified (phosphothreonine). At Lys83 the chain carries N6-acetyllysine. 3 positions are modified to phosphoserine: Ser87, Ser90, and Ser100.

This sequence belongs to the HMGN family. As to quaternary structure, interacts with transcriptional regulator SEHBP. Post-translationally, phosphorylation on Ser-21 and Ser-25 weakens binding to nucleosomes and increases the rate of H3 phosphorylation.

Its subcellular location is the nucleus. In terms of biological role, binds to the inner side of the nucleosomal DNA thus altering the interaction between the DNA and the histone octamer. May be involved in the process which maintains transcribable genes in a unique chromatin conformation. Inhibits the phosphorylation of nucleosomal histones H3 and H2A by RPS6KA5/MSK1 and RPS6KA3/RSK2. This Bos taurus (Bovine) protein is Non-histone chromosomal protein HMG-14 (HMGN1).